We begin with the raw amino-acid sequence, 462 residues long: UDP-N-acetylmuramoylalanine--D-glutamate ligase (462 aa).

125 to 131 (GSDGKTT) lines the ATP pocket.

The protein belongs to the MurCDEF family.

It is found in the cytoplasm. It catalyses the reaction UDP-N-acetyl-alpha-D-muramoyl-L-alanine + D-glutamate + ATP = UDP-N-acetyl-alpha-D-muramoyl-L-alanyl-D-glutamate + ADP + phosphate + H(+). The protein operates within cell wall biogenesis; peptidoglycan biosynthesis. Cell wall formation. Catalyzes the addition of glutamate to the nucleotide precursor UDP-N-acetylmuramoyl-L-alanine (UMA). This Clostridium acetobutylicum (strain ATCC 824 / DSM 792 / JCM 1419 / IAM 19013 / LMG 5710 / NBRC 13948 / NRRL B-527 / VKM B-1787 / 2291 / W) protein is UDP-N-acetylmuramoylalanine--D-glutamate ligase.